A 407-amino-acid polypeptide reads, in one-letter code: D-3-phosphoglycerate dehydrogenase (407 aa).

Residues 161–162, D181, 238–240, and D264 each bind NAD(+); these read HI and ASR. The active site involves R240. Residue E269 is part of the active site. The Proton donor role is filled by H292. 292-295 lines the NAD(+) pocket; that stretch reads HIGG. Residues 340–407 form the ACT domain; that stretch reads RILNIHNNKP…PNSIKTRVLY (68 aa).

It belongs to the D-isomer specific 2-hydroxyacid dehydrogenase family.

It catalyses the reaction (2R)-3-phosphoglycerate + NAD(+) = 3-phosphooxypyruvate + NADH + H(+). The catalysed reaction is (R)-2-hydroxyglutarate + NAD(+) = 2-oxoglutarate + NADH + H(+). It functions in the pathway amino-acid biosynthesis; L-serine biosynthesis; L-serine from 3-phospho-D-glycerate: step 1/3. In terms of biological role, catalyzes the reversible oxidation of 3-phospho-D-glycerate to 3-phosphonooxypyruvate, the first step of the phosphorylated L-serine biosynthesis pathway. Also catalyzes the reversible oxidation of 2-hydroxyglutarate to 2-oxoglutarate. This chain is D-3-phosphoglycerate dehydrogenase (serA), found in Dictyostelium discoideum (Social amoeba).